Reading from the N-terminus, the 80-residue chain is U-actitoxin-Avd9b (80 aa).

A signal peptide spans 1 to 20; sequence MNLKVLAVFVLCAILVVVTA. The propeptide occupies 21–39; it reads ERRGTETGGYKKDTLQDLK. Residues 45–80 form the ShKT domain; sequence CFDRYREAACTSDNIRLLCKTSAKYQINCKKSCGLC. 3 cysteine pairs are disulfide-bonded: Cys45–Cys80, Cys54–Cys73, and Cys63–Cys77. A crucial for binding to potassium channels region spans residues 68–69; that stretch reads KY.

It belongs to the sea anemone type 1 potassium channel toxin family. Type 1b subfamily.

It is found in the secreted. The protein localises to the nematocyst. Functionally, inhibits voltage-gated potassium channels (Kv1/KCNA). In Anemonia viridis (Snakelocks anemone), this protein is U-actitoxin-Avd9b.